We begin with the raw amino-acid sequence, 564 residues long: Nucleoprotein (564 aa).

The tract at residues 54–236 is binding site for the cap structure m7GTP; the sequence is LRKNKRGEED…VTKDESSINI (183 aa). 2 residues coordinate Mn(2+): Asp380 and Glu382. Residues Glu390, Cys497, His500, and Cys525 each coordinate Zn(2+). Mn(2+) is bound at residue Asp529.

This sequence belongs to the arenaviridae nucleocapsid protein family. Homomultimerizes to form the nucleocapsid. Binds to viral genomic RNA. Interacts with glycoprotein G2. Interacts with protein Z; this interaction probably directs the encapsidated genome to budding sites. Interacts with protein L; this interaction does not interfere with Z-L interaction. Interacts with host IKBKE (via Protein kinase domain); the interaction inhibits IKBKE kinase activity.

The protein localises to the virion. Its subcellular location is the host cytoplasm. Encapsidates the genome, protecting it from nucleases. The encapsidated genomic RNA is termed the nucleocapsid (NC). Serves as template for viral transcription and replication. The increased presence of protein N in host cell does not seem to trigger the switch from transcription to replication as observed in other negative strain RNA viruses. Through the interaction with host IKBKE, strongly inhibits the phosphorylation and nuclear translocation of host IRF3, a protein involved in interferon activation pathway, leading to the inhibition of interferon-beta and IRF3-dependent promoters activation. Also encodes a functional 3'-5' exoribonuclease that degrades preferentially dsRNA substrates and thereby participates in the suppression of interferon induction. This Calomys callosus (Large vesper mouse) protein is Nucleoprotein.